Consider the following 167-residue polypeptide: Small ribosomal subunit protein uS5 (167 aa).

An S5 DRBM domain is found at 12–75; that stretch reads LQEKLITVNR…EQARRNMITI (64 aa).

The protein belongs to the universal ribosomal protein uS5 family. As to quaternary structure, part of the 30S ribosomal subunit. Contacts proteins S4 and S8.

In terms of biological role, with S4 and S12 plays an important role in translational accuracy. Its function is as follows. Located at the back of the 30S subunit body where it stabilizes the conformation of the head with respect to the body. This Buchnera aphidicola subsp. Acyrthosiphon pisum (strain APS) (Acyrthosiphon pisum symbiotic bacterium) protein is Small ribosomal subunit protein uS5.